A 238-amino-acid chain; its full sequence is Ribonuclease PH (238 aa).

Phosphate is bound by residues Arg-86 and 124–126 (GTR).

Belongs to the RNase PH family. In terms of assembly, homohexameric ring arranged as a trimer of dimers.

The catalysed reaction is tRNA(n+1) + phosphate = tRNA(n) + a ribonucleoside 5'-diphosphate. Functionally, phosphorolytic 3'-5' exoribonuclease that plays an important role in tRNA 3'-end maturation. Removes nucleotide residues following the 3'-CCA terminus of tRNAs; can also add nucleotides to the ends of RNA molecules by using nucleoside diphosphates as substrates, but this may not be physiologically important. Probably plays a role in initiation of 16S rRNA degradation (leading to ribosome degradation) during starvation. The protein is Ribonuclease PH of Halorhodospira halophila (strain DSM 244 / SL1) (Ectothiorhodospira halophila (strain DSM 244 / SL1)).